Reading from the N-terminus, the 260-residue chain is Large ribosomal subunit protein uL30 (260 aa).

Methionine 1 is modified (N-acetylmethionine). 5 tandem repeats follow at residues 7-18 (KKKKVAAALGTL), 19-30 (KKKKVPAVPETL), 31-42 (KKKRRNFAELKV), 43-54 (KRLRKKFALKTL), and 55-66 (RKARRKLIYEKA). The tract at residues 7 to 66 (KKKKVAAALGTLKKKKVPAVPETLKKKRRNFAELKVKRLRKKFALKTLRKARRKLIYEKA) is 5 X 12 AA tandem repeats. A Phosphothreonine modification is found at threonine 29. At lysine 136 the chain carries N6-acetyllysine. N6-succinyllysine is present on lysine 139. Position 151 is a phosphotyrosine (tyrosine 151).

Belongs to the universal ribosomal protein uL30 family. As to quaternary structure, component of the large ribosomal subunit. Homodimer. Interacts with DHX33.

It is found in the cytoplasm. Its function is as follows. Component of the large ribosomal subunit. The ribosome is a large ribonucleoprotein complex responsible for the synthesis of proteins in the cell. Binds to G-rich structures in 28S rRNA and in mRNAs. Plays a regulatory role in the translation apparatus; inhibits cell-free translation of mRNAs. The chain is Large ribosomal subunit protein uL30 (Rpl7) from Rattus norvegicus (Rat).